A 312-amino-acid polypeptide reads, in one-letter code: tRNA dimethylallyltransferase (312 aa).

Residue 12-19 (GPTAIGKS) coordinates ATP. Substrate is bound at residue 14 to 19 (TAIGKS). Interaction with substrate tRNA stretches follow at residues 38–41 (DSKL) and 162–166 (QRVLR).

Belongs to the IPP transferase family. Monomer. Requires Mg(2+) as cofactor.

The enzyme catalyses adenosine(37) in tRNA + dimethylallyl diphosphate = N(6)-dimethylallyladenosine(37) in tRNA + diphosphate. Catalyzes the transfer of a dimethylallyl group onto the adenine at position 37 in tRNAs that read codons beginning with uridine, leading to the formation of N6-(dimethylallyl)adenosine (i(6)A). This Buchnera aphidicola subsp. Cinara cedri (strain Cc) protein is tRNA dimethylallyltransferase.